The primary structure comprises 21 residues: Peptide PGLa-R5 (21 aa).

Leu-21 bears the Leucine amide mark.

As to expression, expressed by the skin glands.

The protein localises to the secreted. Antimicrobial peptide. This is Peptide PGLa-R5 from Xenopus ruwenzoriensis (Uganda clawed frog).